Reading from the N-terminus, the 59-residue chain is Large ribosomal subunit protein bL32 (59 aa).

This sequence belongs to the bacterial ribosomal protein bL32 family.

This is Large ribosomal subunit protein bL32 from Polynucleobacter necessarius subsp. necessarius (strain STIR1).